The primary structure comprises 130 residues: MAGRAGRTRPRTLRDAIPDCALRSQTLESLDARYVSRDGAGDAAVWFEDMTPAELEVIFPTTDAKLNYLSRTQRLASLLTYAGPIKAPDGPAAPHTQDTACVHGELLARKRERFAAVINRFLDLHQILRG.

It belongs to the herpesviridae TRM2 protein family. Associates with TRM1 and TRM3 to form the tripartite terminase complex.

It is found in the host nucleus. Its function is as follows. Component of the molecular motor that translocates viral genomic DNA in empty capsid during DNA packaging. Forms a tripartite terminase complex together with TRM1 and TRM3 in the host cytoplasm. Once the complex reaches the host nucleus, it interacts with the capsid portal vertex. This portal forms a ring in which genomic DNA is translocated into the capsid. The chain is Tripartite terminase subunit 2 from Homo sapiens (Human).